A 294-amino-acid polypeptide reads, in one-letter code: Cell division protein ZipA (294 aa).

A topological domain (periplasmic) is located at residue methionine 1. The chain crosses the membrane as a helical span at residues 2-22 (EIGLREWLILIGIIVIAGILF). At 23-294 (DGWRRMRGGK…FERRALTQKR (272 aa)) the chain is on the cytoplasmic side. Disordered regions lie at residues 64–111 (THKE…GDLN) and 126–146 (KDDFVADNNRHGAAATPSTPV). Positions 82–91 (ARERERDPKP) are enriched in basic and acidic residues.

The protein belongs to the ZipA family. In terms of assembly, interacts with FtsZ via their C-terminal domains.

Its subcellular location is the cell inner membrane. Essential cell division protein that stabilizes the FtsZ protofilaments by cross-linking them and that serves as a cytoplasmic membrane anchor for the Z ring. Also required for the recruitment to the septal ring of downstream cell division proteins. In Pseudomonas entomophila (strain L48), this protein is Cell division protein ZipA.